A 125-amino-acid chain; its full sequence is Small ribosomal subunit protein uS13 (125 aa).

The disordered stretch occupies residues 92 to 125; that stretch reads RRSLPARGQRTRTNARTRKGKRKTVAGKKKAGKK.

It belongs to the universal ribosomal protein uS13 family. In terms of assembly, part of the 30S ribosomal subunit. Forms a loose heterodimer with protein S19. Forms two bridges to the 50S subunit in the 70S ribosome.

In terms of biological role, located at the top of the head of the 30S subunit, it contacts several helices of the 16S rRNA. In the 70S ribosome it contacts the 23S rRNA (bridge B1a) and protein L5 of the 50S subunit (bridge B1b), connecting the 2 subunits; these bridges are implicated in subunit movement. Contacts the tRNAs in the A and P-sites. This is Small ribosomal subunit protein uS13 from Chlorobaculum parvum (strain DSM 263 / NCIMB 8327) (Chlorobium vibrioforme subsp. thiosulfatophilum).